The sequence spans 143 residues: Peptide methionine sulfoxide reductase MsrB (143 aa).

Residues 5-126 enclose the MsrB domain; the sequence is KEEKIKSLNR…NSAALRFVPK (122 aa). The active-site Nucleophile is the Cys115.

It belongs to the MsrB Met sulfoxide reductase family.

The enzyme catalyses L-methionyl-[protein] + [thioredoxin]-disulfide + H2O = L-methionyl-(R)-S-oxide-[protein] + [thioredoxin]-dithiol. The polypeptide is Peptide methionine sulfoxide reductase MsrB (Bacillus subtilis (strain 168)).